The following is a 375-amino-acid chain: Ribosomal RNA large subunit methyltransferase G (375 aa).

This sequence belongs to the methyltransferase superfamily. RlmG family.

It localises to the cytoplasm. It carries out the reaction guanosine(1835) in 23S rRNA + S-adenosyl-L-methionine = N(2)-methylguanosine(1835) in 23S rRNA + S-adenosyl-L-homocysteine + H(+). Functionally, specifically methylates the guanine in position 1835 (m2G1835) of 23S rRNA. This is Ribosomal RNA large subunit methyltransferase G from Stutzerimonas stutzeri (strain A1501) (Pseudomonas stutzeri).